We begin with the raw amino-acid sequence, 1036 residues long: Ubiquitin carboxyl-terminal hydrolase 48 (1036 aa).

Residues Val-89–Gln-421 form the USP domain. Cys-98 (nucleophile) is an active-site residue. His-353 (proton acceptor) is an active-site residue. 3 DUSP domains span residues Gln-460–Cys-554, Asn-569–Cys-692, and Met-712–Val-825. The interval Asp-611–Glu-644 is disordered. Residues Glu-618–Pro-628 are compositionally biased toward polar residues. The interval Ala-881–Gly-924 is disordered. Residues Ser-887, Ser-888, and Ser-889 each carry the phosphoserine modification. Basic and acidic residues predominate over residues Glu-896–Asp-907. Residues Phe-908–Gly-924 are compositionally biased toward polar residues. The Ubiquitin-like domain maps to Lys-930–Ala-1010. Lys-957 carries the N6-acetyllysine modification.

It belongs to the peptidase C19 family. As to quaternary structure, interacts with TRAF2 and RELA. Interacts with GPS1. Present in the brain, in particular in the postsynaptic density and the dendritic lipid raft fractions (at protein level).

Its subcellular location is the cytoplasm. It is found in the nucleus. The protein resides in the cell projection. It localises to the cilium. It catalyses the reaction Thiol-dependent hydrolysis of ester, thioester, amide, peptide and isopeptide bonds formed by the C-terminal Gly of ubiquitin (a 76-residue protein attached to proteins as an intracellular targeting signal).. Its function is as follows. Deubiquitinase that recognizes and hydrolyzes the peptide bond at the C-terminal Gly of ubiquitin. Involved in the processing of polyubiquitin precursors as well as that of ubiquitinated proteins. Plays a role in the regulation of NF-kappa-B activation by TNF receptor superfamily via its interactions with RELA and TRAF2. May also play a regulatory role at postsynaptic sites. Plays an important role in cell cycle progression by deubiquitinating Aurora B/AURKB and thereby extending its stability. In the context of H. pylori infection, stabilizes nuclear RELA through deubiquitination, thereby promoting the transcriptional activity of RELA to prolong TNFAIP3 de novo synthesis. Consequently, TNFAIP3 suppresses caspase activity and apoptotic cell death. Also functions in the modulation of the ciliary and synaptic transport as well as cytoskeleton organization, which are key for photoreceptor function and homeostasis. To achieve this, stabilizes the levels of the retinal degeneration-associated proteins ARL3 and UNC119 using distinct mechanisms. Plays a positive role in pyroptosis by stabilizing gasdermin E/GSDME through removal of its 'Lys-48'-linked ubiquitination. This is Ubiquitin carboxyl-terminal hydrolase 48 (Usp48) from Rattus norvegicus (Rat).